Here is a 298-residue protein sequence, read N- to C-terminus: 4-hydroxy-3-methylbut-2-enyl diphosphate reductase (298 aa).

Cysteine 12 contacts [4Fe-4S] cluster. The (2E)-4-hydroxy-3-methylbut-2-enyl diphosphate site is built by histidine 40 and histidine 78. Dimethylallyl diphosphate is bound by residues histidine 40 and histidine 78. Isopentenyl diphosphate is bound by residues histidine 40 and histidine 78. Cysteine 100 contributes to the [4Fe-4S] cluster binding site. Histidine 128 is a (2E)-4-hydroxy-3-methylbut-2-enyl diphosphate binding site. Dimethylallyl diphosphate is bound at residue histidine 128. Histidine 128 is an isopentenyl diphosphate binding site. Glutamate 130 acts as the Proton donor in catalysis. Threonine 171 contributes to the (2E)-4-hydroxy-3-methylbut-2-enyl diphosphate binding site. Cysteine 200 lines the [4Fe-4S] cluster pocket. Residues serine 228, serine 229, asparagine 230, and serine 270 each coordinate (2E)-4-hydroxy-3-methylbut-2-enyl diphosphate. Dimethylallyl diphosphate-binding residues include serine 228, serine 229, asparagine 230, and serine 270. Serine 228, serine 229, asparagine 230, and serine 270 together coordinate isopentenyl diphosphate.

It belongs to the IspH family. Requires [4Fe-4S] cluster as cofactor.

The catalysed reaction is isopentenyl diphosphate + 2 oxidized [2Fe-2S]-[ferredoxin] + H2O = (2E)-4-hydroxy-3-methylbut-2-enyl diphosphate + 2 reduced [2Fe-2S]-[ferredoxin] + 2 H(+). It catalyses the reaction dimethylallyl diphosphate + 2 oxidized [2Fe-2S]-[ferredoxin] + H2O = (2E)-4-hydroxy-3-methylbut-2-enyl diphosphate + 2 reduced [2Fe-2S]-[ferredoxin] + 2 H(+). It participates in isoprenoid biosynthesis; dimethylallyl diphosphate biosynthesis; dimethylallyl diphosphate from (2E)-4-hydroxy-3-methylbutenyl diphosphate: step 1/1. Its pathway is isoprenoid biosynthesis; isopentenyl diphosphate biosynthesis via DXP pathway; isopentenyl diphosphate from 1-deoxy-D-xylulose 5-phosphate: step 6/6. Functionally, catalyzes the conversion of 1-hydroxy-2-methyl-2-(E)-butenyl 4-diphosphate (HMBPP) into a mixture of isopentenyl diphosphate (IPP) and dimethylallyl diphosphate (DMAPP). Acts in the terminal step of the DOXP/MEP pathway for isoprenoid precursor biosynthesis. The chain is 4-hydroxy-3-methylbut-2-enyl diphosphate reductase from Kosmotoga olearia (strain ATCC BAA-1733 / DSM 21960 / TBF 19.5.1).